The following is a 76-amino-acid chain: U-scoloptoxin(13)-Sa1a (76 aa).

Residues 1–22 form the signal peptide; it reads MAYIFALIFAFVVCINTDVIQA.

This sequence belongs to the scoloptoxin-13 family. In terms of processing, contains 4 disulfide bonds. As to expression, expressed by the venom gland.

Its subcellular location is the secreted. The protein is U-scoloptoxin(13)-Sa1a of Scolopendra alternans (Florida Keys giant centipede).